A 118-amino-acid polypeptide reads, in one-letter code: Large ribosomal subunit protein bL19 (118 aa).

This sequence belongs to the bacterial ribosomal protein bL19 family.

This protein is located at the 30S-50S ribosomal subunit interface and may play a role in the structure and function of the aminoacyl-tRNA binding site. The polypeptide is Large ribosomal subunit protein bL19 (Teredinibacter turnerae (strain ATCC 39867 / T7901)).